Reading from the N-terminus, the 429-residue chain is MLNPQTRRVRLFARGSWAETRRIAGILRDETISGGLLLAATVLALGWANSPWSGTYDSLLATDFGPAALHLDLSVQQWAADGLLAIFFFVAGLELKREFVAGDLRDPSRAVVPVAAAAGGVAVPAVLYSLLNLHSGALRGWAIPTATDIAFALSVLAVVGRCLPTALRTFLLTLAVVDDLLAIVIIAVAYTGELSVVPLVAAVVPLAAFTLLVQRRVRAWWLLLPLAVLTWALVHASGVHATVAGVLLAFAVPVLRSEGAGGPQAGPGLAEHFEHRWRPLSAAVAVPVFAFCSAGVTVGGLGGLGDALSDRAALGVVVGLVVGKAIGIFTTTWLVARFTGASLERGLAWVDVAGLALLGGVGFTVSLLIGELAFGPGSARDDHVKVGVLTASVTAALLATVVLRLRNRAYARIHELETADDDHEDGPDA.

12 helical membrane-spanning segments follow: residues 32 to 52, 73 to 93, 111 to 131, 140 to 160, 170 to 190, 193 to 213, 219 to 239, 243 to 263, 284 to 304, 316 to 336, 349 to 369, and 383 to 403; these read ISGG…NSPW, LSVQ…VAGL, VVPV…YSLL, GWAI…AVVG, FLLT…AVAY, ELSV…TLLV, AWWL…ASGV, VAGV…AGGP, VAVP…LGGL, VVVG…WLVA, WVDV…SLLI, and HVKV…TVVL.

It belongs to the NhaA Na(+)/H(+) (TC 2.A.33) antiporter family.

It is found in the cell membrane. The enzyme catalyses Na(+)(in) + 2 H(+)(out) = Na(+)(out) + 2 H(+)(in). Na(+)/H(+) antiporter that extrudes sodium in exchange for external protons. The polypeptide is Na(+)/H(+) antiporter NhaA 1 (Frankia alni (strain DSM 45986 / CECT 9034 / ACN14a)).